A 1187-amino-acid polypeptide reads, in one-letter code: BAI1-associated protein 3 (1187 aa).

The segment at 55 to 81 (SFRRRTEQDPGSASADPQEPATGAWKP) is disordered. The region spanning 176-335 (SLEEHTEAIE…VKSARANGTA (160 aa)) is the C2 1 domain. Ca(2+) contacts are provided by D211, D217, D295, and D297. The MHD1 domain occupies 663 to 784 (FELYLTLADL…EATLFYTELL (122 aa)). An MHD2 domain is found at 888–996 (DEAVAPLMKY…CSTRECIEQF (109 aa)). The 127-residue stretch at 1010–1136 (RFGRLSVRCH…GVARPQVGGG (127 aa)) folds into the C2 2 domain. Residues L1040, D1041, D1047, D1105, D1107, S1110, and D1113 each contribute to the Ca(2+) site.

This sequence belongs to the unc-13 family. Interacts with ADGRB1; this interaction is direct. Interacts with endosomal SNARE proteins VAMP3, VAMP4, STX6 and STX16; this interaction is increased in the presence of calcium. Requires Ca(2+) as cofactor. As to expression, predominantly expressed in brain. Also expressed in nonneural tissues such as breast and testes epithelium.

The protein resides in the cytoplasm. It is found in the cytosol. The protein localises to the recycling endosome membrane. Its subcellular location is the late endosome membrane. It localises to the golgi apparatus. The protein resides in the trans-Golgi network membrane. It is found in the cell membrane. Functionally, functions in endosome to Golgi retrograde transport. In response to calcium influx, may interact with SNARE fusion receptors and membrane phospholipids to mediate endosome fusion with the trans-Golgi network. By promoting the recycling of secretory vesicle transmembrane proteins, it indirectly controls dense-core secretory vesicle biogenesis, maturation and their ability to mediate the constitutive and regulated secretion of neurotransmitters and hormones. May regulate behavior and food intake by controlling calcium-stimulated exocytosis of neurotransmitters including NPY and serotonin and hormones like insulin. Proposed to play a role in hypothalamic neuronal firing by modulating gamma-aminobutyric acid (GABA)ergic inhibitory neurotransmission. The chain is BAI1-associated protein 3 from Homo sapiens (Human).